The primary structure comprises 305 residues: tRNA pseudouridine synthase B (305 aa).

Asp39 (nucleophile) is an active-site residue.

Belongs to the pseudouridine synthase TruB family. Type 1 subfamily.

The catalysed reaction is uridine(55) in tRNA = pseudouridine(55) in tRNA. Responsible for synthesis of pseudouridine from uracil-55 in the psi GC loop of transfer RNAs. The chain is tRNA pseudouridine synthase B from Staphylococcus saprophyticus subsp. saprophyticus (strain ATCC 15305 / DSM 20229 / NCIMB 8711 / NCTC 7292 / S-41).